The sequence spans 1390 residues: DNA-directed RNA polymerase III subunit RPC1 (1390 aa).

Residues Cys69, Cys72, Cys79, His82, Cys109, and Cys112 each coordinate Zn(2+). Lys144 contacts DNA. Zn(2+) contacts are provided by Cys156 and Cys159. Lys167, Ser326, Lys348, Arg353, Arg360, and Arg366 together coordinate DNA. The residue at position 445 (Lys445) is an N6-acetyllysine. Arg464 contributes to the RNA binding site. Residues Asp499, Asp501, and Asp503 each coordinate Mg(2+). An RNA-binding site is contributed by Asp503. The segment at 844–856 is bridging helix; that stretch reads PTEFFFHTMAGRE. The DNA site is built by Arg1159, Arg1305, and Lys1323.

It belongs to the RNA polymerase beta' chain family. Component of the RNA polymerase III (Pol III) complex consisting of 17 subunits: a ten-subunit catalytic core composed of POLR3A/RPC1, POLR3B/RPC2, POLR1C/RPAC1, POLR1D/RPAC2, POLR3K/RPC10, POLR2E/RPABC1, POLR2F/RPABC2, POLR2H/RPABC3, POLR2K/RPABC4 and POLR2L/RPABC5; a mobile stalk composed of two subunits POLR3H/RPC8 and CRCP/RPC9, protruding from the core and functioning primarily in transcription initiation; and additional subunits homologous to general transcription factors of the RNA polymerase II machinery, POLR3C/RPC3-POLR3F/RPC6-POLR3G/RPC7 heterotrimer required for transcription initiation and POLR3D/RPC4-POLR3E/RPC5 heterodimer involved in both transcription initiation and termination. As part of the RNA polymerase III complex, interacts with PKP2. Requires Mg(2+) as cofactor.

The protein resides in the nucleus. It localises to the cytoplasm. It is found in the cytosol. The enzyme catalyses RNA(n) + a ribonucleoside 5'-triphosphate = RNA(n+1) + diphosphate. Its function is as follows. Catalytic core component of RNA polymerase III (Pol III), a DNA-dependent RNA polymerase which synthesizes small non-coding RNAs using the four ribonucleoside triphosphates as substrates. Synthesizes 5S rRNA, snRNAs, tRNAs and miRNAs from at least 500 distinct genomic loci. Pol III-mediated transcription cycle proceeds through transcription initiation, transcription elongation and transcription termination stages. During transcription initiation, Pol III is recruited to DNA promoters type I, II or III with the help of general transcription factors and other specific initiation factors. Once the polymerase has escaped from the promoter it enters the elongation phase during which RNA is actively polymerized, based on complementarity with the template DNA strand. Transcription termination involves the release of the RNA transcript and polymerase from the DNA. Forms Pol III active center together with the second largest subunit POLR3B/RPC2. Appends one nucleotide at a time to the 3' end of the nascent RNA, with POLR3A/RPC1 contributing a Mg(2+)-coordinating DxDGD motif, and POLR3B/RPC2 participating in the coordination of a second Mg(2+) ion and providing lysine residues believed to facilitate Watson-Crick base pairing between the incoming nucleotide and template base. Typically, Mg(2+) ions direct a 5' nucleoside triphosphate to form a phosphodiester bond with the 3' hydroxyl of the preceding nucleotide of the nascent RNA, with the elimination of pyrophosphate. Pol III plays a key role in sensing and limiting infection by intracellular bacteria and DNA viruses. Acts as a nuclear and cytosolic DNA sensor involved in innate immune response. Can sense non-self dsDNA that serves as template for transcription into dsRNA. The non-self RNA polymerase III transcripts, such as Epstein-Barr virus-encoded RNAs (EBERs) induce type I interferon and NF-kappa-B through the RIG-I pathway. The chain is DNA-directed RNA polymerase III subunit RPC1 from Bos taurus (Bovine).